The sequence spans 121 residues: uncharacterized protein (121 aa).

The next 2 helical transmembrane spans lie at 16–36 (GFMVFYISLFLILWLAAGFAV) and 74–94 (LYIAAVTVSGFISVYYEMKTI).

Its subcellular location is the cell membrane. This is an uncharacterized protein from Bacillus subtilis (strain 168).